The primary structure comprises 523 residues: Pentatricopeptide repeat-containing protein At1g64580 (523 aa).

PPR repeat units lie at residues 43–77 (HHHHYRERLRNELHCIKFDDAFSLFCEMLQSRPIP), 78–112 (SIVDFTRVLTVIAKMNKFDIVIYLYHKMENLGISH), 113–147 (DLYSFTILIHCFCRCSRLSLALALLGKMMKLGFRP), 148–182 (SIVTLGSLLNGFCQGNRFQEAVSLVDSMDGFGFVP), 183–217 (NVVIYNTVINGLCKNRDLNNALEVFYCMEKKGIRA), 218–252 (DAVTYNTLISGLSNSGRWTDAARLLRDMVKRKIDP), 253–287 (NVIFFTALIDTFVKEGNLLEARNLYKEMIRRSVVP), 288–322 (NVFTYNSLINGFCIHGCLGDAKYMFDLMVSKGCFP), 323–357 (DVVTYNTLITGFCKSKRVEDGMKLFCEMTYQGLVG), 358–392 (DAFTYNTLIHGYCQAGKLNVAQKVFNRMVDCGVSP), 393–427 (DIVTYNILLDCLCNNGKIEKALVMVEDLQKSEMDV), 428–462 (DIITYNIIIQGLCRTDKLKEAWCLFRSLTRKGVKP), and 463–497 (DAIAYITMISGLCRKGLQREADKLCRRMKEDGFMP).

Belongs to the PPR family. P subfamily.

The sequence is that of Pentatricopeptide repeat-containing protein At1g64580 from Arabidopsis thaliana (Mouse-ear cress).